The chain runs to 311 residues: tRNA-cytidine(32) 2-sulfurtransferase (311 aa).

The PP-loop motif signature appears at S47 to S52. [4Fe-4S] cluster-binding residues include C122, C125, and C213.

The protein belongs to the TtcA family. In terms of assembly, homodimer. Requires Mg(2+) as cofactor. [4Fe-4S] cluster is required as a cofactor.

The protein localises to the cytoplasm. It carries out the reaction cytidine(32) in tRNA + S-sulfanyl-L-cysteinyl-[cysteine desulfurase] + AH2 + ATP = 2-thiocytidine(32) in tRNA + L-cysteinyl-[cysteine desulfurase] + A + AMP + diphosphate + H(+). The protein operates within tRNA modification. Functionally, catalyzes the ATP-dependent 2-thiolation of cytidine in position 32 of tRNA, to form 2-thiocytidine (s(2)C32). The sulfur atoms are provided by the cysteine/cysteine desulfurase (IscS) system. In Escherichia coli O1:K1 / APEC, this protein is tRNA-cytidine(32) 2-sulfurtransferase.